The primary structure comprises 482 residues: tRNA sulfurtransferase (482 aa).

Residues 61–165 (QQVLEILTTT…DDKLNQILAH (105 aa)) enclose the THUMP domain. ATP-binding positions include 183 to 184 (LI), Lys265, Gly287, and Gln296. Cys344 and Cys456 are oxidised to a cystine. The Rhodanese domain maps to 404–482 (IEEHAVVLDI…GFNNVKVYRP (79 aa)). Catalysis depends on Cys456, which acts as the Cysteine persulfide intermediate.

It belongs to the ThiI family.

The protein localises to the cytoplasm. The enzyme catalyses [ThiI sulfur-carrier protein]-S-sulfanyl-L-cysteine + a uridine in tRNA + 2 reduced [2Fe-2S]-[ferredoxin] + ATP + H(+) = [ThiI sulfur-carrier protein]-L-cysteine + a 4-thiouridine in tRNA + 2 oxidized [2Fe-2S]-[ferredoxin] + AMP + diphosphate. It catalyses the reaction [ThiS sulfur-carrier protein]-C-terminal Gly-Gly-AMP + S-sulfanyl-L-cysteinyl-[cysteine desulfurase] + AH2 = [ThiS sulfur-carrier protein]-C-terminal-Gly-aminoethanethioate + L-cysteinyl-[cysteine desulfurase] + A + AMP + 2 H(+). It participates in cofactor biosynthesis; thiamine diphosphate biosynthesis. Catalyzes the ATP-dependent transfer of a sulfur to tRNA to produce 4-thiouridine in position 8 of tRNAs, which functions as a near-UV photosensor. Also catalyzes the transfer of sulfur to the sulfur carrier protein ThiS, forming ThiS-thiocarboxylate. This is a step in the synthesis of thiazole, in the thiamine biosynthesis pathway. The sulfur is donated as persulfide by IscS. This is tRNA sulfurtransferase from Vibrio vulnificus (strain YJ016).